The chain runs to 94 residues: Alpha-elapitoxin-Nss2a (94 aa).

The signal sequence occupies residues methionine 1 to serine 21. Intrachain disulfides connect cysteine 24-cysteine 41, cysteine 34-cysteine 62, cysteine 47-cysteine 51, cysteine 66-cysteine 77, and cysteine 78-cysteine 83.

The protein belongs to the three-finger toxin family. Long-chain subfamily. Type II alpha-neurotoxin sub-subfamily. Expressed by the venom gland.

Its subcellular location is the secreted. Binds with high affinity to muscular (alpha-1/CHRNA1) and neuronal (alpha-7/CHRNA7) nicotinic acetylcholine receptor (nAChR) and inhibits acetylcholine from binding to the receptor, thereby impairing neuromuscular and neuronal transmission. In Notechis scutatus scutatus (Mainland tiger snake), this protein is Alpha-elapitoxin-Nss2a.